Here is a 207-residue protein sequence, read N- to C-terminus: Octanoyltransferase (207 aa).

The region spanning 29–204 (AETRDELWVV…HLERHLSTSK (176 aa)) is the BPL/LPL catalytic domain. Substrate-binding positions include 68–75 (RGGQITYH), 135–137 (SLG), and 148–150 (GLS). Cysteine 166 acts as the Acyl-thioester intermediate in catalysis.

Belongs to the LipB family.

Its subcellular location is the cytoplasm. The catalysed reaction is octanoyl-[ACP] + L-lysyl-[protein] = N(6)-octanoyl-L-lysyl-[protein] + holo-[ACP] + H(+). Its pathway is protein modification; protein lipoylation via endogenous pathway; protein N(6)-(lipoyl)lysine from octanoyl-[acyl-carrier-protein]: step 1/2. Catalyzes the transfer of endogenously produced octanoic acid from octanoyl-acyl-carrier-protein onto the lipoyl domains of lipoate-dependent enzymes. Lipoyl-ACP can also act as a substrate although octanoyl-ACP is likely to be the physiological substrate. The sequence is that of Octanoyltransferase from Chromobacterium violaceum (strain ATCC 12472 / DSM 30191 / JCM 1249 / CCUG 213 / NBRC 12614 / NCIMB 9131 / NCTC 9757 / MK).